A 134-amino-acid chain; its full sequence is Putative nickel-responsive regulator (134 aa).

Positions 78, 89, 91, and 97 each coordinate Ni(2+).

Belongs to the transcriptional regulatory CopG/NikR family. The cofactor is Ni(2+).

In terms of biological role, transcriptional regulator. The protein is Putative nickel-responsive regulator of Chlorobium phaeobacteroides (strain DSM 266 / SMG 266 / 2430).